The sequence spans 747 residues: Polyribonucleotide nucleotidyltransferase (747 aa).

Residues aspartate 493 and aspartate 499 each contribute to the Mg(2+) site. In terms of domain architecture, KH spans 560-619 (PRIITLQINPEKIGALIGPGGKTVRGITEATGAQIDIEEDGRVYISTPDAAAAQQAVAMV). Positions 629-698 (GDIFLGKVVR…GTGKVSLSRR (70 aa)) constitute an S1 motif domain. The interval 705–747 (TAEDRRAAGAGRGLRDGGGRSGGSDRGGDRGPRGDDRQRPRRR) is disordered. 2 stretches are compositionally biased toward basic and acidic residues: residues 706-722 (AEDRRAAGAGRGLRDGG) and 730-747 (RGGDRGPRGDDRQRPRRR).

The protein belongs to the polyribonucleotide nucleotidyltransferase family. Requires Mg(2+) as cofactor.

It localises to the cytoplasm. The catalysed reaction is RNA(n+1) + phosphate = RNA(n) + a ribonucleoside 5'-diphosphate. In terms of biological role, involved in mRNA degradation. Catalyzes the phosphorolysis of single-stranded polyribonucleotides processively in the 3'- to 5'-direction. This is Polyribonucleotide nucleotidyltransferase from Roseiflexus sp. (strain RS-1).